We begin with the raw amino-acid sequence, 255 residues long: MKHIPRKRFGQNFLTDDGVLHNIILAIDPQPQDTMVEIGPGLAAMTRLLLDGVNQMHVVELDRDLVERLKKTFDPKKLIIHSADALQFDFSTIPVPAGSKLRVVGNLPYNISSPLLFHLAEMAPHVQDQHFMLQKEVVERMVAEPGSKTYGRLSVMLQWRYHMELMFIVPPTAFDPPPRVESAIVRMIPIEKPLPCDQTKLEQVVLKAFSQRRKVIRNCLAGMFSEADLIEAGINPQMRPETISLAQYVALANRL.

S-adenosyl-L-methionine is bound by residues Asn-12, Leu-14, Gly-39, Glu-60, Asp-84, and Asn-106.

It belongs to the class I-like SAM-binding methyltransferase superfamily. rRNA adenine N(6)-methyltransferase family. RsmA subfamily.

Its subcellular location is the cytoplasm. The catalysed reaction is adenosine(1518)/adenosine(1519) in 16S rRNA + 4 S-adenosyl-L-methionine = N(6)-dimethyladenosine(1518)/N(6)-dimethyladenosine(1519) in 16S rRNA + 4 S-adenosyl-L-homocysteine + 4 H(+). Its function is as follows. Specifically dimethylates two adjacent adenosines (A1518 and A1519) in the loop of a conserved hairpin near the 3'-end of 16S rRNA in the 30S particle. May play a critical role in biogenesis of 30S subunits. The polypeptide is Ribosomal RNA small subunit methyltransferase A (Herminiimonas arsenicoxydans).